The chain runs to 311 residues: Taste receptor type 2 member 9 (311 aa).

The Extracellular portion of the chain corresponds to methionine 1 to tyrosine 9. The helical transmembrane segment at isoleucine 10–cysteine 32 threads the bilayer. The Cytoplasmic portion of the chain corresponds to isoleucine 33–alanine 52. A helical transmembrane segment spans residues isoleucine 53–phenylalanine 72. The Extracellular segment spans residues proline 73 to aspartate 86. The chain crosses the membrane as a helical span at residues alanine 87 to leucine 109. Residues lysine 110 to lysine 128 are Cytoplasmic-facing. The chain crosses the membrane as a helical span at residues valine 129–phenylalanine 146. The Extracellular segment spans residues proline 147 to glutamine 179. An N-linked (GlcNAc...) asparagine glycan is attached at asparagine 163. Residues leucine 180–phenylalanine 202 form a helical membrane-spanning segment. Residues serine 203–valine 233 lie on the Cytoplasmic side of the membrane. The helical transmembrane segment at isoleucine 234–isoleucine 256 threads the bilayer. The Extracellular segment spans residues proline 257–lysine 260. A helical membrane pass occupies residues leucine 261–methionine 283. The Cytoplasmic segment spans residues glycine 284 to proline 311.

This sequence belongs to the G-protein coupled receptor T2R family.

The protein localises to the membrane. Functionally, gustducin-coupled receptor implicated in the perception of bitter compounds in the oral cavity and the gastrointestinal tract. Signals through PLCB2 and the calcium-regulated cation channel TRPM5. This Papio hamadryas (Hamadryas baboon) protein is Taste receptor type 2 member 9 (TAS2R9).